Reading from the N-terminus, the 591-residue chain is CTP synthase (591 aa).

Residues 1 to 281 (MPQSRTHSRT…DAYVVRQLGL (281 aa)) are amidoligase domain. Position 23 (Ser-23) interacts with CTP. Ser-23 contributes to the UTP binding site. ATP is bound by residues 24-29 (SLGKGL) and Asp-81. Residues Asp-81 and Glu-155 each contribute to the Mg(2+) site. CTP is bound by residues 162–164 (DIE), 202–207 (KTKPTQ), and Lys-238. UTP is bound by residues 202–207 (KTKPTQ) and Lys-238. A Glutamine amidotransferase type-1 domain is found at 306–554 (RIALVGKYVD…VDAALKHKLE (249 aa)). Gly-369 serves as a coordination point for L-glutamine. Residue Cys-396 is the Nucleophile; for glutamine hydrolysis of the active site. L-glutamine is bound by residues 397 to 400 (LGLQ), Glu-419, and Arg-480. Residues His-527 and Glu-529 contribute to the active site. A disordered region spans residues 568 to 591 (AVATDDELADSADRDEVASVDSAG).

This sequence belongs to the CTP synthase family. Homotetramer.

The catalysed reaction is UTP + L-glutamine + ATP + H2O = CTP + L-glutamate + ADP + phosphate + 2 H(+). The enzyme catalyses L-glutamine + H2O = L-glutamate + NH4(+). It catalyses the reaction UTP + NH4(+) + ATP = CTP + ADP + phosphate + 2 H(+). It functions in the pathway pyrimidine metabolism; CTP biosynthesis via de novo pathway; CTP from UDP: step 2/2. With respect to regulation, allosterically activated by GTP, when glutamine is the substrate; GTP has no effect on the reaction when ammonia is the substrate. The allosteric effector GTP functions by stabilizing the protein conformation that binds the tetrahedral intermediate(s) formed during glutamine hydrolysis. Inhibited by the product CTP, via allosteric rather than competitive inhibition. Functionally, catalyzes the ATP-dependent amination of UTP to CTP with either L-glutamine or ammonia as the source of nitrogen. Regulates intracellular CTP levels through interactions with the four ribonucleotide triphosphates. The protein is CTP synthase of Rhodococcus jostii (strain RHA1).